We begin with the raw amino-acid sequence, 315 residues long: Olfactory receptor 56A3 (315 aa).

Topologically, residues 1-29 (MTTHRNDTLSTEASDFLLNCFVRSPSWQH) are extracellular. N-linked (GlcNAc...) asparagine glycosylation is present at N6. A helical membrane pass occupies residues 30–50 (WLSLPLSLLFLLAVGANTTLL). The Cytoplasmic segment spans residues 51–58 (MTIWLEAS). The chain crosses the membrane as a helical span at residues 59–79 (LHQPLYYLLSLLSLLDIVLCL). At 80–103 (TVIPKVLTIFWFDLRPISFPACFL) the chain is on the extracellular side. C101 and C193 are joined by a disulfide. A helical membrane pass occupies residues 104–124 (QMYIMNCFLAMESCTFMVMAY). At 125–143 (DRYVAICHPLRYPSIITDH) the chain is on the cytoplasmic side. A helical transmembrane segment spans residues 144-164 (FVVKAAMFILTRNVLMTLPIP). Topologically, residues 165–200 (ILSAQLRYCGRNVIENCICANMSVSRLSCDDVTINH) are extracellular. N-linked (GlcNAc...) asparagine glycosylation occurs at N185. The chain crosses the membrane as a helical span at residues 201–221 (LYQFAGGWTLLGSDLILIFLS). The Cytoplasmic portion of the chain corresponds to 222–241 (YTFILRAVLRLKAEGAVAKA). The chain crosses the membrane as a helical span at residues 242–262 (LSTCGSHFMLILFFSTILLVF). Topologically, residues 263–277 (VLTHVAKKKVSPDVP) are extracellular. Residues 278-298 (VLLNVLHHVIPAALNPIIYGV) form a helical membrane-spanning segment. The Cytoplasmic segment spans residues 299–315 (RTQEIKQGMQRLLKKGC).

It belongs to the G-protein coupled receptor 1 family.

The protein resides in the cell membrane. Odorant receptor. The protein is Olfactory receptor 56A3 (OR56A3) of Homo sapiens (Human).